The following is a 156-amino-acid chain: Small ribosomal subunit protein uS7 (156 aa).

It belongs to the universal ribosomal protein uS7 family. In terms of assembly, part of the 30S ribosomal subunit. Contacts proteins S9 and S11.

Its function is as follows. One of the primary rRNA binding proteins, it binds directly to 16S rRNA where it nucleates assembly of the head domain of the 30S subunit. Is located at the subunit interface close to the decoding center, probably blocks exit of the E-site tRNA. The polypeptide is Small ribosomal subunit protein uS7 (Frankia casuarinae (strain DSM 45818 / CECT 9043 / HFP020203 / CcI3)).